A 492-amino-acid polypeptide reads, in one-letter code: Peptidyl-prolyl cis-trans isomerase-like 4 (492 aa).

In terms of domain architecture, PPIase cyclophilin-type spans 1-161 (MAVLLETTLG…QDIRINHTVI (161 aa)). The disordered stretch occupies residues 167 to 188 (DDPPDLLIPDRSPEPTKEQLDS). The span at 177–187 (RSPEPTKEQLD) shows a compositional bias: basic and acidic residues. Phosphoserine is present on S178. T182 carries the post-translational modification Phosphothreonine. Residues K201, K212, and K218 each participate in a glycyl lysine isopeptide (Lys-Gly) (interchain with G-Cter in SUMO2) cross-link. Positions 240-318 (NVLFVCKLNP…RRIHVDFSQS (79 aa)) constitute an RRM domain. Glycyl lysine isopeptide (Lys-Gly) (interchain with G-Cter in SUMO2) cross-links involve residues K321 and K362. Disordered regions lie at residues 368–409 (DEQG…NPNQ) and 423–492 (EESC…SKYR). Residues 377–390 (SHSHTSKKHKKKTR) are compositionally biased toward basic residues. S393 carries the post-translational modification Phosphoserine. Residue K405 forms a Glycyl lysine isopeptide (Lys-Gly) (interchain with G-Cter in SUMO2) linkage. Basic and acidic residues predominate over residues 426–436 (CWEKQKNEKRD). K460 is covalently cross-linked (Glycyl lysine isopeptide (Lys-Gly) (interchain with G-Cter in SUMO2)). S471 bears the Phosphoserine mark. Residues 473 to 485 (KRDRSRSPKKSKA) show a composition bias toward basic residues.

It belongs to the cyclophilin-type PPIase family. PPIL4 subfamily.

The protein resides in the nucleus. It carries out the reaction [protein]-peptidylproline (omega=180) = [protein]-peptidylproline (omega=0). PPIases accelerate the folding of proteins. It catalyzes the cis-trans isomerization of proline imidic peptide bonds in oligopeptides. In Mus musculus (Mouse), this protein is Peptidyl-prolyl cis-trans isomerase-like 4 (Ppil4).